Reading from the N-terminus, the 371-residue chain is Peptidyl-prolyl cis-trans isomerase CPR6 (371 aa).

The PPIase cyclophilin-type domain occupies 7–174 (FFDISIGGKP…RDVKIDDCGV (168 aa)). TPR repeat units lie at residues 219 to 252 (IETV…LKEY), 270 to 303 (VSIP…EAAD), and 308 to 341 (AKAL…QPND).

Belongs to the cyclophilin-type PPIase family. PPIase D subfamily. Interacts with RPD3.

The protein resides in the cytoplasm. It carries out the reaction [protein]-peptidylproline (omega=180) = [protein]-peptidylproline (omega=0). In terms of biological role, PPIases accelerate the folding of proteins. It catalyzes the cis-trans isomerization of proline imidic peptide bonds in oligopeptides. The polypeptide is Peptidyl-prolyl cis-trans isomerase CPR6 (CPR6) (Saccharomyces cerevisiae (strain ATCC 204508 / S288c) (Baker's yeast)).